The following is a 321-amino-acid chain: Viral T-cell receptor beta chain-like T17T-22 (321 aa).

An N-terminal signal peptide occupies residues M1–A28. Residues D29–S122 are v segment. The N-linked (GlcNAc...) asparagine; by host glycan is linked to N105. Residues P123–E128 are d segment. A j segment region spans residues Y129–V144. The segment at E145–S321 is c region. N-linked (GlcNAc...) asparagine; by host glycosylation is found at N214 and N264.

The sequence is that of Viral T-cell receptor beta chain-like T17T-22 (V-TCR) from Feline leukemia virus.